The chain runs to 254 residues: Isoprenyl transferase (254 aa).

D12 is a catalytic residue. Residue D12 participates in Mg(2+) binding. Substrate contacts are provided by residues 13-16, W17, R25, H29, and 57-59; these read GNGR and SSE. The active-site Proton acceptor is N60. Residues W61, R63, R180, and 186 to 188 contribute to the substrate site; that span reads RLS. Position 199 (E199) interacts with Mg(2+).

Belongs to the UPP synthase family. As to quaternary structure, homodimer. Mg(2+) is required as a cofactor.

Functionally, catalyzes the condensation of isopentenyl diphosphate (IPP) with allylic pyrophosphates generating different type of terpenoids. This chain is Isoprenyl transferase, found in Brucella suis biovar 1 (strain 1330).